The following is a 979-amino-acid chain: Ankycorbin (979 aa).

Position 1 is an N-acetylmethionine (M1). S11 is subject to Phosphoserine. 7 ANK repeats span residues 18 to 51, 52 to 81, 85 to 114, 118 to 147, 151 to 180, 184 to 213, and 217 to 247; these read KNDD…KHDS, EGKT…DVTA, SGHS…PAEN, SGKT…PINL, DGNI…DVNS, NGRT…DLSL, and LGHN…DADL. Over residues 247–259 the composition is skewed to basic and acidic residues; sequence LKTPTKPKQHDQV. The disordered stretch occupies residues 247 to 299; it reads LKTPTKPKQHDQVSKISSERSGTPKKRKAPPPPISPTQLSDVSSPRSITSTPL. T249 is modified (phosphothreonine). The Nuclear localization signal signature appears at 270-276; sequence PKKRKAP. 3 positions are modified to phosphoserine: S281, S286, and S293. A compositionally biased stretch (polar residues) spans 282–299; that stretch reads PTQLSDVSSPRSITSTPL. Phosphothreonine is present on residues T295 and T297. Phosphoserine occurs at positions 300, 304, 318, 327, 329, 340, 341, and 358. Positions 349–374 form a coiled coil; sequence LVLLQAKVASLTLHNKELQDKLQAKS. Disordered stretches follow at residues 392 to 429 and 446 to 467; these read TQTD…TDND and LESS…RTDT. Residues 430–943 adopt a coiled-coil conformation; it reads VIIRQLQDSL…CKKHHQEVIS (514 aa). Basic and acidic residues predominate over residues 446–457; that stretch reads LESSEAEKKQLQ. Residues 458-467 show a composition bias toward polar residues; the sequence is DELQSQRTDT. S513, S516, S667, S694, and S914 each carry phosphoserine.

In terms of assembly, interacts with PALLD. Associates with actin. However, does not bind F-actin directly. Highly expressed in testis, where it localizes to seminiferous tubules (at protein level). Expressed in ganglion cell layer and in Muller cell fibers of the retina (at protein level). In small intestine highly expressed at the apical and lateral borders of absorptive epithelia (at protein level). In liver highly expressed along the bile canaliculi (at protein level).

The protein localises to the cytoplasm. The protein resides in the cytoskeleton. Its subcellular location is the stress fiber. It localises to the cell cortex. It is found in the cell junction. The protein localises to the nucleus. In terms of biological role, plays a role in actin regulation at the ectoplasmic specialization, a type of cell junction specific to testis. Important for establishment of sperm polarity and normal spermatid adhesion. May also promote integrity of Sertoli cell tight junctions at the blood-testis barrier. The polypeptide is Ankycorbin (Rai14) (Mus musculus (Mouse)).